Reading from the N-terminus, the 388-residue chain is Succinate--CoA ligase [ADP-forming] subunit beta (388 aa).

An ATP-grasp domain is found at 9–236; that stretch reads KKLFAEHGVP…VAAVDPLEQK (228 aa). ATP is bound by residues Lys-45, 52–54, Glu-91, Ser-94, and Glu-99; that span reads GRG. Positions 191 and 205 each coordinate Mg(2+). Substrate is bound by residues Asn-256 and 318 to 320; that span reads GIT.

It belongs to the succinate/malate CoA ligase beta subunit family. Heterotetramer of two alpha and two beta subunits. Mg(2+) serves as cofactor.

It carries out the reaction succinate + ATP + CoA = succinyl-CoA + ADP + phosphate. The catalysed reaction is GTP + succinate + CoA = succinyl-CoA + GDP + phosphate. Its pathway is carbohydrate metabolism; tricarboxylic acid cycle; succinate from succinyl-CoA (ligase route): step 1/1. Functionally, succinyl-CoA synthetase functions in the citric acid cycle (TCA), coupling the hydrolysis of succinyl-CoA to the synthesis of either ATP or GTP and thus represents the only step of substrate-level phosphorylation in the TCA. The beta subunit provides nucleotide specificity of the enzyme and binds the substrate succinate, while the binding sites for coenzyme A and phosphate are found in the alpha subunit. This Parafrankia sp. (strain EAN1pec) protein is Succinate--CoA ligase [ADP-forming] subunit beta.